The sequence spans 82 residues: RNA-binding protein GK0100 (82 aa).

Belongs to the eukaryotic ribosomal protein eL8 family.

In Geobacillus kaustophilus (strain HTA426), this protein is RNA-binding protein GK0100.